Consider the following 229-residue polypeptide: Large ribosomal subunit protein uL1 (229 aa).

This sequence belongs to the universal ribosomal protein uL1 family. Part of the 50S ribosomal subunit.

Functionally, binds directly to 23S rRNA. The L1 stalk is quite mobile in the ribosome, and is involved in E site tRNA release. In terms of biological role, protein L1 is also a translational repressor protein, it controls the translation of the L11 operon by binding to its mRNA. This is Large ribosomal subunit protein uL1 from Rhodopseudomonas palustris (strain TIE-1).